The primary structure comprises 78 residues: Acyl carrier protein (78 aa).

One can recognise a Carrier domain in the interval 2–77 (SDSAEKVKKI…DAIDYIEANK (76 aa)). Position 37 is an O-(pantetheine 4'-phosphoryl)serine (Ser-37).

The protein belongs to the acyl carrier protein (ACP) family. 4'-phosphopantetheine is transferred from CoA to a specific serine of apo-ACP by AcpS. This modification is essential for activity because fatty acids are bound in thioester linkage to the sulfhydryl of the prosthetic group.

It is found in the cytoplasm. It participates in lipid metabolism; fatty acid biosynthesis. In terms of biological role, carrier of the growing fatty acid chain in fatty acid biosynthesis. This is Acyl carrier protein from Sphingopyxis alaskensis (strain DSM 13593 / LMG 18877 / RB2256) (Sphingomonas alaskensis).